Consider the following 1381-residue polypeptide: Non-structural polyprotein 1AB (1381 aa).

A coiled-coil region spans residues 121–160; that stretch reads VLVQEHKKLDSDLKESRRELSQLKLEHSLLRHDYERLVRE. 5 helical membrane-spanning segments follow: residues 169 to 189, 249 to 269, 279 to 299, 324 to 344, and 365 to 385; these read FKFS…MSAV, LALG…LVGT, LYML…VALA, AFAI…CLAM, and FSHL…AILI. Catalysis depends on charge relay system; for serine protease activity residues H477, D506, and S569. Position 694 is an O-(5'-phospho-RNA)-tyrosine (Y694). A coiled-coil region spans residues 703-732; sequence TRDQLREMAEAAREADDDFDDYEEEKNEVD. A disordered region spans residues 856-879; the sequence is MQRKKQKPKKREEGPERGPINPDE. One can recognise a RdRp catalytic domain in the interval 1122–1254; sequence SVFIEFDWTR…TFDHVPPDYV (133 aa).

The protein belongs to the astroviridae polyprotein 1AB family. As to quaternary structure, monomer. Cleaved by the viral and host proteases. The protease is probably autocatalytically cleaved.

It localises to the host membrane. The catalysed reaction is RNA(n) + a ribonucleoside 5'-triphosphate = RNA(n+1) + diphosphate. In terms of biological role, responsible for the cleavage of the polyprotein into functional products. Its function is as follows. Protein covalently attached to the 5' extremity of the genomic and subgenomic RNAs. It may serve as a primer for the replicase. In Neovison vison (American mink), this protein is Non-structural polyprotein 1AB (ORF1).